The chain runs to 880 residues: 3-isopropylmalate dehydratase large subunit gloJ (880 aa).

[4Fe-4S] cluster contacts are provided by Cys457, Cys520, and Cys523.

It belongs to the aconitase/IPM isomerase family. LeuC type 2 subfamily. It depends on [4Fe-4S] cluster as a cofactor.

The enzyme catalyses (2R,3S)-3-isopropylmalate = (2S)-2-isopropylmalate. The protein operates within mycotoxin biosynthesis. Its function is as follows. 3-isopropylmalate dehydratase large subunit; part of the gene cluster that mediates the biosynthesis of pneumocandins, lipohexapeptides of the echinocandin family that prevent fungal cell wall formation by non-competitive inhibition of beta-1,3-glucan synthase. The 10,12-dimethylmyristoyl side chain is synthesized by the reducing polyketide synthase gloL/GLPKS4. The thioesterase gloN/GLHYD exclusively interacts with gloL/GLPKS4 to maintain turnover of the polyketide side chain. The 10R,12S-dimethylmyristic acid is then transferred to the first thiolation domain of the nonribosomal peptide synthetase gloA/GLNRPS4 by the acyl-AMP ligase gloD/GLligase, followed by its acylation to L-ornithine to trigger elongation of the cyclic hexapeptide. L-ornithine, 4R-hydroxyl-L-proline (generated from L-proline by the dioxygenase gloF/GLOXY2), 3S-hydroxyl-L-homotyrosine (generated by gloG/GLHtyB, gloH/GLHtyA, gloI/GLHtyC, gloJ/GLHtyD and hydroxylated at C-3 by the dioxygenase gloM/GLOXY1), 3R-hydroxyl-L-glutamine (generated from L-glutamine probably by the dioxygenase gloE/GLOXY3) and 3S-hydroxyl-L-proline (generated from L-proline by the dioxygenase gloF/GLOXY2 to yield pneumocandin B0), or 3S-hydroxyl-4S-methyl-L-proline (generated from L-leucine by the dioxygenase gloC/GLOXY4 to yield pneumocandin A0) are sequentially added to the growing chain. The last C domain of gloA/GLNRPS4 is proposed to be responsible for cyclization by condensation to form the peptide bond between L-ornithine and 3S-hydroxyl-4S-methyl-L-proline (for pneumocandin A0) or 3S-hydroxyl-L-proline (for pneumocandin B0). Finally, the subsequent C-4 hydroxylation of 3S-hydroxyl-L-homotyrosine and L-ornithine dihydroxylation at C-4 and C-5 are performed by the cytochrome P450 monooxygenases gloP/GLP450-1 and gloO/GLP450-2, respectively. This Glarea lozoyensis (strain ATCC 20868 / MF5171) protein is 3-isopropylmalate dehydratase large subunit gloJ.